The following is a 136-amino-acid chain: Probable intron-encoded DNA endonuclease 3 (136 aa).

Belongs to the LAGLIDADG endonuclease family.

The protein resides in the mitochondrion. Its function is as follows. Mitochondrial DNA endonuclease involved in intron homing. In Mycosarcoma maydis (Corn smut fungus), this protein is Probable intron-encoded DNA endonuclease 3 (hegI3).